The following is a 164-amino-acid chain: Transcriptional repressor NrdR (164 aa).

A zinc finger lies at 3 to 34; the sequence is CPFCSAQDTKVIDSRLVADGVQIRRRRECLSC. The ATP-cone domain occupies 49-139; sequence PRLVKTDGTR…VYRSFQDISE (91 aa).

This sequence belongs to the NrdR family. Zn(2+) serves as cofactor.

Its function is as follows. Negatively regulates transcription of bacterial ribonucleotide reductase nrd genes and operons by binding to NrdR-boxes. This Alcanivorax borkumensis (strain ATCC 700651 / DSM 11573 / NCIMB 13689 / SK2) protein is Transcriptional repressor NrdR.